We begin with the raw amino-acid sequence, 120 residues long: Protein TCL1B4 (120 aa).

Belongs to the TCL1 family.

The protein is Protein TCL1B4 (Tcl1b4) of Mus musculus (Mouse).